The primary structure comprises 245 residues: tRNA1(Val) (adenine(37)-N6)-methyltransferase (245 aa).

Belongs to the methyltransferase superfamily. tRNA (adenine-N(6)-)-methyltransferase family.

It localises to the cytoplasm. The enzyme catalyses adenosine(37) in tRNA1(Val) + S-adenosyl-L-methionine = N(6)-methyladenosine(37) in tRNA1(Val) + S-adenosyl-L-homocysteine + H(+). Functionally, specifically methylates the adenine in position 37 of tRNA(1)(Val) (anticodon cmo5UAC). This is tRNA1(Val) (adenine(37)-N6)-methyltransferase from Erwinia tasmaniensis (strain DSM 17950 / CFBP 7177 / CIP 109463 / NCPPB 4357 / Et1/99).